The chain runs to 338 residues: Ketol-acid reductoisomerase (NADP(+)) (338 aa).

Residues 1 to 181 form the KARI N-terminal Rossmann domain; it reads MRVYYDKDCD…GGGRSGIIET (181 aa). Residues 24 to 27, Arg47, Ser50, Ser52, and 82 to 85 each bind NADP(+); these read YGSQ and DENQ. Residue His107 is part of the active site. Gly133 is a binding site for NADP(+). The region spanning 182–327 is the KARI C-terminal knotted domain; it reads TFKDETETDL…EKLRGMMPWI (146 aa). Positions 190, 194, 226, and 230 each coordinate Mg(2+). Ser251 is a binding site for substrate.

It belongs to the ketol-acid reductoisomerase family. The cofactor is Mg(2+).

It catalyses the reaction (2R)-2,3-dihydroxy-3-methylbutanoate + NADP(+) = (2S)-2-acetolactate + NADPH + H(+). It carries out the reaction (2R,3R)-2,3-dihydroxy-3-methylpentanoate + NADP(+) = (S)-2-ethyl-2-hydroxy-3-oxobutanoate + NADPH + H(+). The protein operates within amino-acid biosynthesis; L-isoleucine biosynthesis; L-isoleucine from 2-oxobutanoate: step 2/4. It functions in the pathway amino-acid biosynthesis; L-valine biosynthesis; L-valine from pyruvate: step 2/4. In terms of biological role, involved in the biosynthesis of branched-chain amino acids (BCAA). Catalyzes an alkyl-migration followed by a ketol-acid reduction of (S)-2-acetolactate (S2AL) to yield (R)-2,3-dihydroxy-isovalerate. In the isomerase reaction, S2AL is rearranged via a Mg-dependent methyl migration to produce 3-hydroxy-3-methyl-2-ketobutyrate (HMKB). In the reductase reaction, this 2-ketoacid undergoes a metal-dependent reduction by NADPH to yield (R)-2,3-dihydroxy-isovalerate. This chain is Ketol-acid reductoisomerase (NADP(+)), found in Chromohalobacter salexigens (strain ATCC BAA-138 / DSM 3043 / CIP 106854 / NCIMB 13768 / 1H11).